Here is a 95-residue protein sequence, read N- to C-terminus: U6 snRNA-associated Sm-like protein LSm2 (95 aa).

The Sm domain maps to 2-76; that stretch reads LFYSFFKSLV…VRYVQLPADE (75 aa). Thr-79 carries the phosphothreonine modification.

The protein belongs to the snRNP Sm proteins family. As to quaternary structure, component of the precatalytic spliceosome (spliceosome B complex). Component of the U4/U6-U5 tri-snRNP complex, a building block of the precatalytic spliceosome (spliceosome B complex). The U4/U6-U5 tri-snRNP complex is composed of the U4, U6 and U5 snRNAs and at least PRPF3, PRPF4, PRPF6, PRPF8, PRPF31, SNRNP200, TXNL4A, SNRNP40, SNRPB, SNRPD1, SNRPD2, SNRPD3, SNRPE, SNRPF, SNRPG, DDX23, CD2BP2, PPIH, SNU13, EFTUD2, SART1 and USP39, plus LSM2, LSM3, LSM4, LSM5, LSM6, LSM7 and LSM8. LSM2, LSM3, LSM4, LSM5, LSM6, LSM7 and LSM8 form a heptameric, ring-shaped subcomplex (the LSM2-8 complex) that is part of the U4/U6-U5 tri-snRNP complex and the precatalytic spliceosome.

Its subcellular location is the nucleus. Plays a role in pre-mRNA splicing as component of the U4/U6-U5 tri-snRNP complex that is involved in spliceosome assembly, and as component of the precatalytic spliceosome (spliceosome B complex). The heptameric LSM2-8 complex binds specifically to the 3'-terminal U-tract of U6 snRNA. The polypeptide is U6 snRNA-associated Sm-like protein LSm2 (LSM2) (Homo sapiens (Human)).